We begin with the raw amino-acid sequence, 248 residues long: tRNA uridine(34) hydroxylase (248 aa).

One can recognise a Rhodanese domain in the interval 127-221 (RGRPLVLLDT…YFEEVGGEGY (95 aa)). Cys-181 serves as the catalytic Cysteine persulfide intermediate.

Belongs to the TrhO family.

It catalyses the reaction uridine(34) in tRNA + AH2 + O2 = 5-hydroxyuridine(34) in tRNA + A + H2O. Catalyzes oxygen-dependent 5-hydroxyuridine (ho5U) modification at position 34 in tRNAs. This chain is tRNA uridine(34) hydroxylase, found in Xanthomonas axonopodis pv. citri (strain 306).